Reading from the N-terminus, the 730-residue chain is Phosphoribosylformylglycinamidine synthase subunit PurL (730 aa).

His-44 is an active-site residue. The ATP site is built by Tyr-47 and Lys-86. Glu-88 contributes to the Mg(2+) binding site. Substrate is bound by residues 89–92 (SHNH) and Arg-111. The active-site Proton acceptor is the His-90. Mg(2+) is bound at residue Asp-112. Gln-235 provides a ligand contact to substrate. Mg(2+) is bound at residue Asp-263. Position 307 to 309 (307 to 309 (ESQ)) interacts with substrate. Positions 489 and 526 each coordinate ATP. Asn-527 contributes to the Mg(2+) binding site. Ser-529 contacts substrate.

Belongs to the FGAMS family. In terms of assembly, monomer. Part of the FGAM synthase complex composed of 1 PurL, 1 PurQ and 2 PurS subunits.

Its subcellular location is the cytoplasm. It carries out the reaction N(2)-formyl-N(1)-(5-phospho-beta-D-ribosyl)glycinamide + L-glutamine + ATP + H2O = 2-formamido-N(1)-(5-O-phospho-beta-D-ribosyl)acetamidine + L-glutamate + ADP + phosphate + H(+). It functions in the pathway purine metabolism; IMP biosynthesis via de novo pathway; 5-amino-1-(5-phospho-D-ribosyl)imidazole from N(2)-formyl-N(1)-(5-phospho-D-ribosyl)glycinamide: step 1/2. Part of the phosphoribosylformylglycinamidine synthase complex involved in the purines biosynthetic pathway. Catalyzes the ATP-dependent conversion of formylglycinamide ribonucleotide (FGAR) and glutamine to yield formylglycinamidine ribonucleotide (FGAM) and glutamate. The FGAM synthase complex is composed of three subunits. PurQ produces an ammonia molecule by converting glutamine to glutamate. PurL transfers the ammonia molecule to FGAR to form FGAM in an ATP-dependent manner. PurS interacts with PurQ and PurL and is thought to assist in the transfer of the ammonia molecule from PurQ to PurL. The protein is Phosphoribosylformylglycinamidine synthase subunit PurL of Pelagibacter ubique (strain HTCC1062).